Reading from the N-terminus, the 447-residue chain is N-succinylarginine dihydrolase (447 aa).

Residues 19 to 28 (AGLSFGNEAS), asparagine 110, and 137 to 138 (HR) contribute to the substrate site. Glutamate 174 is a catalytic residue. Arginine 212 provides a ligand contact to substrate. Histidine 248 is a catalytic residue. Substrate contacts are provided by aspartate 250 and asparagine 359. Catalysis depends on cysteine 365, which acts as the Nucleophile.

Belongs to the succinylarginine dihydrolase family. Homodimer.

It carries out the reaction N(2)-succinyl-L-arginine + 2 H2O + 2 H(+) = N(2)-succinyl-L-ornithine + 2 NH4(+) + CO2. The protein operates within amino-acid degradation; L-arginine degradation via AST pathway; L-glutamate and succinate from L-arginine: step 2/5. In terms of biological role, catalyzes the hydrolysis of N(2)-succinylarginine into N(2)-succinylornithine, ammonia and CO(2). The chain is N-succinylarginine dihydrolase from Salmonella arizonae (strain ATCC BAA-731 / CDC346-86 / RSK2980).